A 615-amino-acid chain; its full sequence is Probable inactive purple acid phosphatase 24 (615 aa).

Residues 1–26 (MARVLGVLLCLLALFSSSLCLDHANG) form the signal peptide. Residues Asn-129, Asn-267, and Asn-275 are each glycosylated (N-linked (GlcNAc...) asparagine). Asp-297 contributes to the Fe cation binding site. The N-linked (GlcNAc...) asparagine glycan is linked to Asn-318. Fe cation-binding residues include Asp-338 and Tyr-341. Residue Asp-338 participates in Zn(2+) binding. Zn(2+)-binding residues include Asn-371, His-460, and His-502. Asn-371 serves as a coordination point for substrate. Residue 502–504 (HVH) coordinates substrate. His-504 lines the Fe cation pocket. The N-linked (GlcNAc...) asparagine glycan is linked to Asn-592.

The protein belongs to the metallophosphoesterase superfamily. Purple acid phosphatase family. As to quaternary structure, homodimer. Requires Fe cation as cofactor. Zn(2+) is required as a cofactor. As to expression, specifically expressed in flowers.

It is found in the secreted. This is Probable inactive purple acid phosphatase 24 (PAP24) from Arabidopsis thaliana (Mouse-ear cress).